A 173-amino-acid chain; its full sequence is NADH-ubiquinone oxidoreductase chain 6 (173 aa).

5 consecutive transmembrane segments (helical) span residues Met-1 to Ser-21, Tyr-27 to Gly-47, Val-48 to Val-68, Val-87 to Leu-107, and Cys-139 to Leu-159.

This sequence belongs to the complex I subunit 6 family.

Its subcellular location is the mitochondrion membrane. The catalysed reaction is a ubiquinone + NADH + 5 H(+)(in) = a ubiquinol + NAD(+) + 4 H(+)(out). Its function is as follows. Core subunit of the mitochondrial membrane respiratory chain NADH dehydrogenase (Complex I) that is believed to belong to the minimal assembly required for catalysis. Complex I functions in the transfer of electrons from NADH to the respiratory chain. The immediate electron acceptor for the enzyme is believed to be ubiquinone. The protein is NADH-ubiquinone oxidoreductase chain 6 (MT-ND6) of Larus canus (Common gull).